The chain runs to 210 residues: SAP domain-containing ribonucleoprotein (210 aa).

N-acetylalanine is present on alanine 2. The 35-residue stretch at 8–42 folds into the SAP domain; sequence LHKLKLAELKQECLARGLETKGIKQDLINRLQAYL. Lysine 10 carries the post-translational modification N6-acetyllysine. Residues 45–64 show a composition bias toward acidic residues; sequence HAEEEANEEDVLGDETEEEE. The interval 45–87 is disordered; that stretch reads HAEEEANEEDVLGDETEEEEPKPIELPVKEEEPPEKAVDMASE. The span at 65-87 shows a compositional bias: basic and acidic residues; that stretch reads PKPIELPVKEEEPPEKAVDMASE. N6-acetyllysine is present on lysine 142. A disordered region spans residues 162–210; it reads SSISRKSEDDEKLKKRKERFGIVTSSAGTGTTEDTEAKKRKRAERFGIA. Phosphoserine is present on serine 163. Over residues 184–193 the composition is skewed to polar residues; sequence VTSSAGTGTT.

The protein belongs to the SAP domain-containing ribonucleoprotein family. As to quaternary structure, interacts with DDX39A. Interacts with FUS. Interacts (via the C-terminal domain) with DDX39B; the interaction is direct and facilitates RNA binding of DDX39B. Component of the transcription/export (TREX) complex at least composed of ALYREF/THOC4, DDX39B, SARNP/CIP29, CHTOP and the THO subcomplex; TREX seems to have dynamic structure involving ATP-dependent remodeling; in the complex interacts directly with DDX39B in a ATP-dependent manner which bridges it to ALYREF/THOC4.

It is found in the nucleus. Its subcellular location is the nucleus speckle. In terms of biological role, binds both single-stranded and double-stranded DNA with higher affinity for the single-stranded form. Specifically binds to scaffold/matrix attachment region DNA. Also binds single-stranded RNA. Enhances RNA unwinding activity of DDX39A. May participate in important transcriptional or translational control of cell growth, metabolism and carcinogenesis. Component of the TREX complex which is thought to couple mRNA transcription, processing and nuclear export, and specifically associates with spliced mRNA and not with unspliced pre-mRNA. The TREX complex is recruited to spliced mRNAs by a transcription-independent mechanism, binds to mRNA upstream of the exon-junction complex (EJC) and is recruited in a splicing- and cap-dependent manner to a region near the 5' end of the mRNA where it functions in mRNA export to the cytoplasm via the TAP/NXF1 pathway. Associates with DDX39B, which facilitates RNA binding of DDX39B and likely plays a role in mRNA export. In Mus musculus (Mouse), this protein is SAP domain-containing ribonucleoprotein (Sarnp).